The sequence spans 59 residues: Large ribosomal subunit protein bL32 (59 aa).

A disordered region spans residues 1–21; the sequence is MAVPKKKSSKSKGRSRAAHHA.

The protein belongs to the bacterial ribosomal protein bL32 family.

The chain is Large ribosomal subunit protein bL32 from Magnetococcus marinus (strain ATCC BAA-1437 / JCM 17883 / MC-1).